A 437-amino-acid polypeptide reads, in one-letter code: Epsilon-sarcoglycan (437 aa).

The Extracellular portion of the chain corresponds to methionine 1 to phenylalanine 317. An N-linked (GlcNAc...) asparagine glycan is attached at asparagine 200. The helical transmembrane segment at leucine 318–isoleucine 338 threads the bilayer. The Cytoplasmic portion of the chain corresponds to methionine 339–proline 437.

This sequence belongs to the sarcoglycan alpha/epsilon family. In terms of processing, N-glycosylated. Ubiquitinated, leading to its degradation by the proteasome.

It is found in the cell membrane. The protein resides in the sarcolemma. The protein localises to the cytoplasm. Its subcellular location is the cytoskeleton. It localises to the cell projection. It is found in the dendrite. The protein resides in the golgi apparatus. Functionally, component of the sarcoglycan complex, a subcomplex of the dystrophin-glycoprotein complex which forms a link between the F-actin cytoskeleton and the extracellular matrix. The protein is Epsilon-sarcoglycan of Macaca fascicularis (Crab-eating macaque).